We begin with the raw amino-acid sequence, 93 residues long: UPF0473 protein BH1270 (93 aa).

This sequence belongs to the UPF0473 family.

The chain is UPF0473 protein BH1270 from Halalkalibacterium halodurans (strain ATCC BAA-125 / DSM 18197 / FERM 7344 / JCM 9153 / C-125) (Bacillus halodurans).